A 69-amino-acid chain; its full sequence is DNA gyrase inhibitor YacG (69 aa).

Residues Cys13, Cys16, Cys32, and Cys36 each contribute to the Zn(2+) site.

It belongs to the DNA gyrase inhibitor YacG family. In terms of assembly, interacts with GyrB. Zn(2+) is required as a cofactor.

Functionally, inhibits all the catalytic activities of DNA gyrase by preventing its interaction with DNA. Acts by binding directly to the C-terminal domain of GyrB, which probably disrupts DNA binding by the gyrase. In Neisseria meningitidis serogroup B (strain ATCC BAA-335 / MC58), this protein is DNA gyrase inhibitor YacG.